A 260-amino-acid polypeptide reads, in one-letter code: Large ribosomal subunit protein eL8A (260 aa).

Residues 1–34 are disordered; sequence MPSSKKVAPAPLATKSKASTSTKNPLFESTPKNF.

It belongs to the eukaryotic ribosomal protein eL8 family. In terms of assembly, component of the large ribosomal subunit. Mature ribosomes consist of a small (40S) and a large (60S) subunit. The 40S subunit contains about 32 different proteins and 1 molecule of RNA (18S). The 60S subunit contains 45 different proteins and 3 molecules of RNA (25S, 5.8S and 5S).

It is found in the cytoplasm. Functionally, component of the ribosome, a large ribonucleoprotein complex responsible for the synthesis of proteins in the cell. The small ribosomal subunit (SSU) binds messenger RNAs (mRNAs) and translates the encoded message by selecting cognate aminoacyl-transfer RNA (tRNA) molecules. The large subunit (LSU) contains the ribosomal catalytic site termed the peptidyl transferase center (PTC), which catalyzes the formation of peptide bonds, thereby polymerizing the amino acids delivered by tRNAs into a polypeptide chain. The nascent polypeptides leave the ribosome through a tunnel in the LSU and interact with protein factors that function in enzymatic processing, targeting, and the membrane insertion of nascent chains at the exit of the ribosomal tunnel. The polypeptide is Large ribosomal subunit protein eL8A (Candida albicans (strain SC5314 / ATCC MYA-2876) (Yeast)).